Reading from the N-terminus, the 518-residue chain is Protein nucleotidyltransferase YdiU (518 aa).

Positions 100, 102, 103, 123, 135, 136, 193, and 200 each coordinate ATP. The Proton acceptor role is filled by aspartate 270. Mg(2+)-binding residues include asparagine 271 and aspartate 280. Aspartate 280 contributes to the ATP binding site.

The protein belongs to the SELO family. Mg(2+) serves as cofactor. Mn(2+) is required as a cofactor.

It catalyses the reaction L-seryl-[protein] + ATP = 3-O-(5'-adenylyl)-L-seryl-[protein] + diphosphate. The enzyme catalyses L-threonyl-[protein] + ATP = 3-O-(5'-adenylyl)-L-threonyl-[protein] + diphosphate. The catalysed reaction is L-tyrosyl-[protein] + ATP = O-(5'-adenylyl)-L-tyrosyl-[protein] + diphosphate. It carries out the reaction L-histidyl-[protein] + UTP = N(tele)-(5'-uridylyl)-L-histidyl-[protein] + diphosphate. It catalyses the reaction L-seryl-[protein] + UTP = O-(5'-uridylyl)-L-seryl-[protein] + diphosphate. The enzyme catalyses L-tyrosyl-[protein] + UTP = O-(5'-uridylyl)-L-tyrosyl-[protein] + diphosphate. Its function is as follows. Nucleotidyltransferase involved in the post-translational modification of proteins. It can catalyze the addition of adenosine monophosphate (AMP) or uridine monophosphate (UMP) to a protein, resulting in modifications known as AMPylation and UMPylation. This Xanthomonas oryzae pv. oryzae (strain MAFF 311018) protein is Protein nucleotidyltransferase YdiU.